We begin with the raw amino-acid sequence, 367 residues long: DNA replication and repair protein RecF (367 aa).

Residue 30–37 coordinates ATP; that stretch reads GENAQGKT.

This sequence belongs to the RecF family.

It is found in the cytoplasm. Functionally, the RecF protein is involved in DNA metabolism; it is required for DNA replication and normal SOS inducibility. RecF binds preferentially to single-stranded, linear DNA. It also seems to bind ATP. This is DNA replication and repair protein RecF from Chlamydia abortus (strain DSM 27085 / S26/3) (Chlamydophila abortus).